The primary structure comprises 1944 residues: MENDEAFDRLIRKIQENQKHPSFEGSNKVLHLALSYLNTNRQNPHWVCDPKLQVAVRECLFLFSFQNDNEYLVWFKKHLNERLQLCPKCIVKYHQSLDDFKSLCLNIFHFDPNTLEIVMEKIYSWDIFRLQEVLKTVPKIDTSSASKPILCAFYEILYSPRILHNKEIFPLFRNRFLESGFLRLSKNLVPGVISLLFSRDDELRRWACSILSDVKTISDNEFKILEGPLLQEIRSLDQKKENENEMQIFLKGLSLLLKHVDHLYFRGLTGKNFNVADFILSGLQSDHTNLCPSFLVCLHSLLYCYGRNFWTPEISPSEVIDKIFNGNAYKRWTEENTSNFSNDQKAENPFEWATSLLKTISIIDEVELINKILINYTMQYKKELEVGFKNVQLLQSLADIFSVLFSEYFMIFPHSDQSLQNKVFELHSTLAIKFDELFRLLNLENEESVEWRLIKKVFEYRLNLDLYILKQFYCHYLDRNRKPPLNIKSVSESFKNFWVYLQNVFREEKFFMVRIVFRACSTVCLIDKLPPKKVDIPFKSDFENALNGFVATFSEMLIQTQCWHLSAQTQLVSNPLTFRGIFSLVFSPILEISTGSISIIKSISLSDSVVDTIGELLRSQFSNTLNSSCYVLLQWLKVRNFGGAKHIVYFNKLIINTIFDSVDGLTSKDATFAKQVEKKESLKNFWESLWKFFTHFFIVLPTWPVHDKDNLVDLMRDTLDFCDMLINIFEEVNGFIFGLSDNDIKIVSANDKGSALAMCIADSLVTVSYWLKLTDSSLLTSVVKVICKMLKICKKLECPISQNVIDIIHRASITSDEQTILTFTEREDLFISLTPYLSEDVLNHSPFNDTNTLETKLQSDDRGLLSKDQTIGIAKKLPESNISTSNHFLLPPKAISASKAINRNAQKSQNLNFLKSKQETTQRIRESAKVPRTSAGNHLSEKLNSDNHIPKALQKLDSADPIRKPSLLHTSKSYSNPDDKNTSTSDEDTSESEEESSNGLFSLAREANSHASKSLPQRRQIQFLDFDSLKTKNVVHPTQLRRNTQQSAQLARLRLNPDVQEFYKVILGWNPLADSFSASNVEMQCVQAKFTYNDSNAYEKVFKPMLFHECWAQVKSAVEEKQYPPIDLILNTRSTVDNFVDIYFTSCSPTEVSFLSDTDICLLSKSQSSGDTNNPKSFQLCKIQSISRKKESLELCLRMNIESIDLQEYAPNIRFTAQKLFNATTSLREFAALKSLRHLPLSQRILDANVTRLPSNFTDDKKQKIMKSYGVNEPQAYAIYASSVNDGFTLIQGPPGTGKTKTILGMIGAVLTSSSQGLQFNVPGQTRKTSKNKILICAPSNAAIDEILLRIKAGVYDHEGIKFFPKVIRVGFGDSISVHAKEFTLEEQMIKQMELTNLKKDQEANNSSDTRKKYDSIIKKRDSLREDLEKFRSTGKNSSILEAQLREITKQKNMLEQSLDDMRERQRSTNRNLDVLKKQIQNQLLQEADIVCATLSASGHELLLNAGLTFRTVIIDEAAQAVELSSIIPLKYGCESCVMVGDPNQLPPTVLSKTSAKFGYSQSLYVRMFKQHNESACLLSIQYRMNPEISRFPSKFFYNSKLLDGPNMSAVTSRPWHEDPQLGIYRFFNVHGTEAFSNSKSLYNVEEASFILLLYERLIQCYLNIDFEGKIGVVTPYRSQVQQLRSQFQRKYGSIIFKHLDIHTVDGFQGQEKDIIIFSCVRSSMSGGIGFLQDLRRLNVALTRAKSSLYIVGNSKPLMQEDIFYSLIEDAKTRGVWRDLSANQFKNSKSISNVSTHLASNNLNLASRDTPIKSPSVGICEEKQEAHKVKKRHNIDSANLSRGTERDEDIPNKRAKNKVSTDQTAADNKVTKPRLDESSSSKQDVLNKIDESEIEQASSKKPGYVEKNKDKGHMKKSKKPKSKLALAAMAHGFAPPKVEHFKRK.

Positions 908–999 are disordered; that stretch reads SQNLNFLKSK…SESEEESSNG (92 aa). Composition is skewed to basic and acidic residues over residues 916–929 and 939–949; these read SKQE…ESAK and LSEKLNSDNHI. Residues 985–996 show a composition bias toward acidic residues; that stretch reads SDEDTSESEEES. 1293 to 1300 is a binding site for ATP; that stretch reads GPPGTGKT. The disordered stretch occupies residues 1824-1944; that stretch reads QEAHKVKKRH…PPKVEHFKRK (121 aa). Composition is skewed to basic and acidic residues over residues 1843–1852 and 1869–1891; these read GTERDEDIPN and KVTK…KIDE. Residues 1912–1922 show a composition bias toward basic residues; sequence GHMKKSKKPKS.

Belongs to the DNA2/NAM7 helicase family.

It is found in the nucleus. This is an uncharacterized protein from Schizosaccharomyces pombe (strain 972 / ATCC 24843) (Fission yeast).